The chain runs to 215 residues: Glutaredoxin 2 (215 aa).

The GST N-terminal domain maps to 1-77 (MKLYIYDHCP…YVDKLDGKPL (77 aa)). Cysteines 9 and 12 form a disulfide.

The protein belongs to the glutaredoxin family.

Functionally, involved in reducing some disulfides in a coupled system with glutathione reductase. Does not act as hydrogen donor for ribonucleotide reductase. The chain is Glutaredoxin 2 (grxB) from Escherichia coli O157:H7.